We begin with the raw amino-acid sequence, 284 residues long: GPN-loop GTPase 3 (284 aa).

13 to 18 (GSGKST) contacts GTP. The Gly-Pro-Asn (GPN)-loop; involved in dimer interface signature appears at 72–74 (GPN). 174 to 177 (TKMD) contacts GTP. The segment at 262 to 284 (EPREHEEESSSMFDEYFQERQNE) is disordered.

The protein belongs to the GPN-loop GTPase family. In terms of assembly, heterodimer with GPN1. Binds to RNA polymerase II (RNAPII). Interacts directly with subunits RPB4 and RPB7 and the CTD of RPB1.

Small GTPase required for proper localization of RNA polymerase II (RNAPII). May act at an RNAP assembly step prior to nuclear import. This chain is GPN-loop GTPase 3, found in Mus musculus (Mouse).